A 75-amino-acid polypeptide reads, in one-letter code: Large ribosomal subunit protein uL29 (75 aa).

It belongs to the universal ribosomal protein uL29 family.

The chain is Large ribosomal subunit protein uL29 from Nostoc punctiforme (strain ATCC 29133 / PCC 73102).